We begin with the raw amino-acid sequence, 259 residues long: MKGRMFCASQASTAICSSMDHVHKSTTTDEDERNSGRAIDRHNPIIKDGRRSFADDFIKLPTSAEDGEMSNKKLEIYKGRRSITGRRSTGGGGGGGAAALLKLITNDIGLARKSFSCVARPACDLIKTPVGSTRYLLGSDPDSITGSVDQDPAKTVEAEAPAGEDKTLTEKKTTCGDTDQQVVVLKVSLHCRGCEGKVRKHLARMQGVTSFNIDFAAKKVTVTGDITPLEILDSISKVKNAQFWTNPTIPKPNVETQNP.

Positions 141–165 (PDSITGSVDQDPAKTVEAEAPAGED) are disordered. Residues 151-165 (DPAKTVEAEAPAGED) show a composition bias toward basic and acidic residues. An HMA domain is found at 180–246 (QQVVVLKVSL…KVKNAQFWTN (67 aa)). Residues cysteine 191 and cysteine 194 each coordinate a metal cation.

This chain is Protein SODIUM POTASSIUM ROOT DEFECTIVE 2, found in Arabidopsis thaliana (Mouse-ear cress).